Consider the following 896-residue polypeptide: MKKTAHIISHSHWDREWYMPFEGHRYYLIQLMDDLLELFATDPNFRSFHMDGQTIMLEDYLNIRPEKEAEVRKYIQDGRLVIGPWYILQDAFLTSAEANVRNLLYGIKDTETFGQKREQIGYFPDTFGIYGQAPQLLAQAGIRAAVFGRGVTPTGFNNQVQHDDYSSPFSELIWEAPDGSQVIGILLANWYSNGNEIPTDEDEAQTFWVKKLRDAERFASTSQLLFMNGCDHQPVQKDVTQAIKVAETLFPDVAFKHSNFHDYLTQIKEELPKELQKITGELRNQKTDGWSTLVNTASARIYLKQANDRCQTLLTNVLEPMCLLVENKSLHRDFSEYYWKLLMENHPHDSICGCSIDAVHREMKTRFEKVEAGATTFIAEQGKEIAAQINTLHDSEEAIPLVVLKTNGTSGKRVVRHKVAMKKIYFDEMDFRHIPDRLKEIVMPTYRLEFPNKGSVPIEVQDAGVRFGYDLPRDGFRRPYYARELEVTFSYDSDLYLGYECGFLVPVEEKQTEARKELIGDPSMNTLENEAMKVMIHRNGSYSILDKTTGFEYRHLGIYEDVGDIGNEYMFKASSDGVRYTTEACEASIRIIENNSLCATVEICQTLSVPAAADERLKEEQERLVWHPDRKAGRSKERTDITLRTELTLEQGAKGLKVNVNIDNTAKDHRMRALFPVERARGNHYADSIYEIVERPNTPDPKWQNPAFDHHMQRLVSLDNGEYGLTIATKGLHEYEIVSDSIAVTLLRSVGELGDWGLFETPEAQCFGQNEAQFVLLPHKGDVLSANVYVAAYDDPVEPTVIQTEQSMGPLPHATNLFQWSGEGLVLTACKPTMDGRGMILRWFNPKREGEALIVQSTHFLQIYRSTILEEQIEKLGTENVQIEVRPQEIVTLRFE.

His-12, Asp-14, Asp-125, and His-348 together coordinate a divalent metal cation. Asp-125 functions as the Nucleophile in the catalytic mechanism.

The protein belongs to the glycosyl hydrolase 38 family. Requires a divalent metal cation as cofactor.

It carries out the reaction (2R)-2-O-(6-phospho-alpha-D-mannosyl)-glycerate + H2O = alpha-D-mannose 6-phosphate + (R)-glycerate. In terms of biological role, may hydrolyze 6-phospho-mannosyl-D-glycerate to mannose-6-phosphate and glycerate. This is Putative mannosylglycerate hydrolase (mngB) from Halalkalibacterium halodurans (strain ATCC BAA-125 / DSM 18197 / FERM 7344 / JCM 9153 / C-125) (Bacillus halodurans).